The following is a 158-amino-acid chain: uncharacterized protein (158 aa).

This is an uncharacterized protein from Archaeoglobus fulgidus (strain ATCC 49558 / DSM 4304 / JCM 9628 / NBRC 100126 / VC-16).